A 213-amino-acid polypeptide reads, in one-letter code: StAR-related lipid transfer protein 5 (213 aa).

Positions 1–213 (MDPALAAQMS…LQKAVKQFHE (213 aa)) constitute an START domain.

Functionally, may be involved in the intracellular transport of sterols or other lipids. May bind cholesterol or other sterols. In Pongo abelii (Sumatran orangutan), this protein is StAR-related lipid transfer protein 5 (STARD5).